The following is a 195-amino-acid chain: GTP-dependent dephospho-CoA kinase (195 aa).

GTP-binding residues include D49, V50, D68, E127, and D150.

It belongs to the GTP-dependent DPCK family.

It catalyses the reaction 3'-dephospho-CoA + GTP = GDP + CoA + H(+). It functions in the pathway cofactor biosynthesis; coenzyme A biosynthesis. Catalyzes the GTP-dependent phosphorylation of the 3'-hydroxyl group of dephosphocoenzyme A to form coenzyme A (CoA). The chain is GTP-dependent dephospho-CoA kinase from Methanosarcina barkeri (strain Fusaro / DSM 804).